Here is a 907-residue protein sequence, read N- to C-terminus: Polyphosphoinositide phosphatase (907 aa).

The 394-residue stretch at 154–547 folds into the SAC domain; the sequence is FQNVDLSSNF…GDTLSLQYGG (394 aa). Positions 707–790 are disordered; sequence GIDPSPFTVR…MTDTGDSAKA (84 aa). The segment covering 758-770 has biased composition (acidic residues); sequence SEDDSGTDREDEG.

As to quaternary structure, component of the PI(3,5)P2 regulatory complex/PAS complex, at least composed of PIKFYVE, FIG4 and VAC14. VAC14 nucleates the assembly of the complex and serves as a scaffold by pentamerizing into a star-shaped structure, which can bind a single copy each of PIKFYVE and FIG4 and coordinates their activities. As to expression, wide-spread.

Its subcellular location is the endosome membrane. The catalysed reaction is a 1,2-diacyl-sn-glycero-3-phospho-(1D-myo-inositol-3,5-bisphosphate) + H2O = a 1,2-diacyl-sn-glycero-3-phospho-(1D-myo-inositol-3-phosphate) + phosphate. It carries out the reaction a 1,2-diacyl-sn-glycero-3-phospho-(1D-myo-inositol-4,5-bisphosphate) + H2O = a 1,2-diacyl-sn-glycero-3-phospho-(1D-myo-inositol 4-phosphate) + phosphate. It catalyses the reaction a 1,2-diacyl-sn-glycero-3-phospho-(1D-myo-inositol-3,4,5-trisphosphate) + H2O = a 1,2-diacyl-sn-glycero-3-phospho-(1D-myo-inositol-3,4-bisphosphate) + phosphate. The enzyme catalyses O-phospho-L-seryl-[protein] + H2O = L-seryl-[protein] + phosphate. The PI(3,5)P2 regulatory complex regulates both the synthesis and turnover of phosphatidylinositol 3,5-bisphosphate (PtdIns(3,5)P2). In vitro, hydrolyzes all three D5-phosphorylated polyphosphoinositide substrates in the order PtdIns(4,5)P2 &gt; PtdIns(3,5)P2 &gt; PtdIns(3,4,5)P3. Plays a role in the biogenesis of endosome carrier vesicles (ECV) / multivesicular bodies (MVB) transport intermediates from early endosomes. Functionally, dual specificity phosphatase component of the PI(3,5)P2 regulatory complex which regulates both the synthesis and turnover of phosphatidylinositol 3,5-bisphosphate (PtdIns(3,5)P2). Catalyzes the dephosphorylation of phosphatidylinositol 3,5-bisphosphate (PtdIns(3,5)P2) to form phosphatidylinositol 3-phosphate. Has serine-protein phosphatase activity acting on PIKfyve to stimulate its lipid kinase activity, its catalytically activity being required for maximal PI(3,5)P2 production. In vitro, hydrolyzes all three D5-phosphorylated polyphosphoinositide and although displaying preferences for PtdIns(3,5)P2, it is capable of hydrolyzing PtdIns(3,4,5)P3 and PtdIns(4,5)P2, at least in vitro. This chain is Polyphosphoinositide phosphatase (Fig4), found in Mus musculus (Mouse).